A 103-amino-acid chain; its full sequence is Small ribosomal subunit protein uS10 (103 aa).

Belongs to the universal ribosomal protein uS10 family. In terms of assembly, part of the 30S ribosomal subunit.

Its function is as follows. Involved in the binding of tRNA to the ribosomes. The polypeptide is Small ribosomal subunit protein uS10 (Ruthia magnifica subsp. Calyptogena magnifica).